We begin with the raw amino-acid sequence, 182 residues long: uncharacterized protein (182 aa).

Disordered stretches follow at residues M1 to L73 and S105 to R182. 2 stretches are compositionally biased toward low complexity: residues R43–S68 and S105–T121. Over residues A122–S131 the composition is skewed to pro residues.

This is an uncharacterized protein from Caenorhabditis elegans.